We begin with the raw amino-acid sequence, 205 residues long: D-alanine--D-alanine ligase (205 aa).

The ATP-grasp domain occupies 111-205; sequence KHVLKSLGID…LGRAIGTMEF (95 aa). 139–190 serves as a coordination point for ATP; that stretch reads MPYPFVIKPICGGSTIGVHAIFSRSEYLDLSVHADALEGRMLVEEYIPGQEV.

The protein belongs to the D-alanine--D-alanine ligase family. It depends on Mg(2+) as a cofactor. Requires Mn(2+) as cofactor.

It is found in the cytoplasm. It carries out the reaction 2 D-alanine + ATP = D-alanyl-D-alanine + ADP + phosphate + H(+). Its pathway is cell wall biogenesis; peptidoglycan biosynthesis. Cell wall formation. The sequence is that of D-alanine--D-alanine ligase (ddl) from Anaplasma centrale.